The following is a 636-amino-acid chain: Transcription termination factor FttA (636 aa).

Positions 3–70 are KHa; the sequence is SEMLEEIKRT…IIIRSDRSVL (68 aa). The tract at residues 71-138 is KHb; the sequence is MDPEKAIRKI…WAPKILRTPP (68 aa). Residues 179–383 form a metallo-beta-lactamase N-terminus region; the sequence is WARLTAMGGF…LVMESTYGGH (205 aa). Residues histidine 242, histidine 244, aspartate 246, histidine 247, histidine 329, and aspartate 352 each contribute to the Zn(2+) site. Positions 384–577 are beta-Casp; it reads EDVQPSRNRA…MNIKTIEGFS (194 aa). Residues 578–636 form a metallo-beta-lactamase C-terminus region; it reads GHSDRRQLMEYVKRISPKPEKILLCHGDNYKTLDLASSIYRTYRIETKTPLNLETVRIQ. Histidine 603 serves as a coordination point for Zn(2+).

Belongs to the metallo-beta-lactamase superfamily. RNA-metabolizing metallo-beta-lactamase-like family. FttA subfamily. In terms of assembly, homodimer. Interacts with RNA polymerase (RNAP), interacts with the Spt4-Spt5 complex. Does not seem to interact with the RNA degrading exosome. It depends on Zn(2+) as a cofactor.

With respect to regulation, most active at 0.5 M or 0.7 M NaCl, less active at 1.0 M NaCl. Nuclease activity is inhibited by N,N,Tetrakis-(2-pyridylmethyl)-ethylene diamine (TPEN), a specific chelator of zinc ions. In terms of biological role, terminates transcription on the whole genome. Termination is linked to FttA-mediated RNA cleavage and does not require NTP hydrolysis. Cleaves endonucleolytically at the RNA exit channel of RNA polymerase (RNAP); the 5'-3' exonuclease activity of this protein degrades the nascent RNA released from RNAP. An RNA nuclease, it bind single-stranded RNA (ssRNA) with a preference for U-rich sequences. The protein is Transcription termination factor FttA of Methanothermobacter thermautotrophicus (strain ATCC 29096 / DSM 1053 / JCM 10044 / NBRC 100330 / Delta H) (Methanobacterium thermoautotrophicum).